The primary structure comprises 520 residues: 2-isopropylmalate synthase (520 aa).

Residues 12–274 form the Pyruvate carboxyltransferase domain; that stretch reads VIIFDTTLRD…WNKIDTTQLT (263 aa). Mn(2+) is bound by residues Asp21, His209, His211, and Asn245. Positions 398–520 are regulatory domain; the sequence is KLTSLTVIAG…RDTVTTAAAS (123 aa).

It belongs to the alpha-IPM synthase/homocitrate synthase family. LeuA type 1 subfamily. As to quaternary structure, homodimer. Mn(2+) is required as a cofactor.

The protein localises to the cytoplasm. It catalyses the reaction 3-methyl-2-oxobutanoate + acetyl-CoA + H2O = (2S)-2-isopropylmalate + CoA + H(+). The protein operates within amino-acid biosynthesis; L-leucine biosynthesis; L-leucine from 3-methyl-2-oxobutanoate: step 1/4. Catalyzes the condensation of the acetyl group of acetyl-CoA with 3-methyl-2-oxobutanoate (2-ketoisovalerate) to form 3-carboxy-3-hydroxy-4-methylpentanoate (2-isopropylmalate). This is 2-isopropylmalate synthase from Bradyrhizobium diazoefficiens (strain JCM 10833 / BCRC 13528 / IAM 13628 / NBRC 14792 / USDA 110).